Consider the following 591-residue polypeptide: Aspartate--tRNA ligase (591 aa).

Residue Glu-173 participates in L-aspartate binding. The aspartate stretch occupies residues 197–200 (QLFK). An L-aspartate-binding site is contributed by Arg-219. Residues 219-221 (RDE) and Gln-228 contribute to the ATP site. His-448 contributes to the L-aspartate binding site. Position 482 (Glu-482) interacts with ATP. Arg-489 is an L-aspartate binding site. 534–537 (GLDR) provides a ligand contact to ATP.

This sequence belongs to the class-II aminoacyl-tRNA synthetase family. Type 1 subfamily. As to quaternary structure, homodimer.

The protein resides in the cytoplasm. The catalysed reaction is tRNA(Asp) + L-aspartate + ATP = L-aspartyl-tRNA(Asp) + AMP + diphosphate. In terms of biological role, catalyzes the attachment of L-aspartate to tRNA(Asp) in a two-step reaction: L-aspartate is first activated by ATP to form Asp-AMP and then transferred to the acceptor end of tRNA(Asp). This Shewanella amazonensis (strain ATCC BAA-1098 / SB2B) protein is Aspartate--tRNA ligase.